Reading from the N-terminus, the 600-residue chain is Baculoviral IAP repeat-containing protein 3 (600 aa).

Residues 27–94 (ELYRLSTYSA…RKLYPSCNFV (68 aa)) form a BIR 1 repeat. Residue S138 is modified to Phosphoserine. BIR repeat units lie at residues 167–233 (EKAR…CPFL) and 253–320 (HAAR…CEYL). Residues C290, C293, H310, and C317 each coordinate Zn(2+). The region spanning 436–525 (EESDDLALIR…ALYRDIFVQQ (90 aa)) is the CARD domain. The RING-type zinc finger occupies 553 to 588 (CKVCMDREVSIVFIPCGHLVVCKDCAPSLRKCPICR).

The protein belongs to the IAP family. As to quaternary structure, interacts with PRSS25; the interaction inhibits apoptotic suppressor activity. The BIR motifs region interacts with TNF receptor associated factors 1 and 2 (TRAF1 and TRAF2) to form a heteromeric complex, which is then recruited to the tumor necrosis factor receptor 2 (TNFR2). Interaction with TRAF2 is required for ubiquitination of IKBKE, degradation of NFKBIA and activation of NF-kappa-B. Interacts with RIP1, RIP2, RIP3, RIP4 and USP19. Post-translationally, auto-ubiquitinated and degraded by the proteasome in apoptotic cells.

The protein resides in the cytoplasm. The protein localises to the nucleus. The catalysed reaction is S-ubiquitinyl-[E2 ubiquitin-conjugating enzyme]-L-cysteine + [acceptor protein]-L-lysine = [E2 ubiquitin-conjugating enzyme]-L-cysteine + N(6)-ubiquitinyl-[acceptor protein]-L-lysine.. Its activity is regulated as follows. USP19 regulates the stability of BIRC3/c-IAP2 by preventing its ubiquitination. Functionally, multi-functional protein which regulates not only caspases and apoptosis, but also modulates inflammatory signaling and immunity, mitogenic kinase signaling and cell proliferation, as well as cell invasion and metastasis. Acts as an E3 ubiquitin-protein ligase regulating NF-kappa-B signaling and regulates both canonical and non-canonical NF-kappa-B signaling by acting in opposite directions: acts as a positive regulator of the canonical pathway and suppresses constitutive activation of non-canonical NF-kappa-B signaling. The target proteins for its E3 ubiquitin-protein ligase activity include: RIPK1, RIPK2, RIPK3, RIPK4, CASP3, CASP7, CASP8, IKBKE, TRAF1, and BCL10. Acts as an important regulator of innate immune signaling via regulation of Toll-like receptors (TLRs), Nodlike receptors (NLRs) and RIG-I like receptors (RLRs), collectively referred to as pattern recognition receptors (PRRs). Protects cells from spontaneous formation of the ripoptosome, a large multi-protein complex that has the capability to kill cancer cells in a caspase-dependent and caspase-independent manner. Suppresses ripoptosome formation by ubiquitinating RIPK1 and CASP8. The sequence is that of Baculoviral IAP repeat-containing protein 3 (Birc3) from Mus musculus (Mouse).